A 277-amino-acid polypeptide reads, in one-letter code: Caspase-6 (277 aa).

The propeptide occupies 1–5 (MTETD). Positions 25-27 (KRR) are tri-arginine exosite. Residue serine 62 is modified to Phosphoserine. Histidine 104 is a catalytic residue. The tract at residues 108-125 (NHIYAYDAKIEIQTLTGL) is 130's region. Cysteine 146 is a catalytic residue. Residues 163 to 176 (HQTDKLDDNVTQVD) constitute a propeptide that is removed on maturation. A Phosphoserine modification is found at serine 240. 2 S-palmitoyl cysteine lipidation sites follow: cysteine 247 and cysteine 260.

The protein belongs to the peptidase C14A family. Heterotetramer that consists of two anti-parallel arranged heterodimers, each one formed by a 18 kDa (p18) and a 11 kDa (p11) subunits. Interacts with BIRC6/bruce. Interacts with RIPK3. In terms of assembly, heterotetramer that consists of two anti-parallel arranged heterodimers, each one formed by a 18 kDa (Caspase-6 subunit p18) and a 11 kDa (Caspase-6 subunit p11) subunit. Phosphorylated by NUAK1; phosphorylation inhibits self-activation. Phosphorylation at Ser-240 by AMP-activated protein kinase (PRKAA1 or PRKAA2) inhibits autocleavage, preventing caspase activation, thereby preventing hepatocyte apoptosis. In terms of processing, palmitoylation by ZDHHC17 blocks dimerization and subsequent activation, leading to inhibit the cysteine protease activity. Post-translationally, can be cleaved and activated by different caspases, depending on the context. Cleaved and activated by caspase-8 (CASP8) and subsequently by caspase-3 (CASP3). Can also undergo autoactivation by mediating autocleavage at Asp-162 and Asp-176, while it is not able to cleave its N-terminal disordered prodomain. Cleaved and activated by CASP1, possibly in the context of inflammation.

The protein localises to the cytoplasm. It is found in the nucleus. The enzyme catalyses Strict requirement for Asp at position P1 and has a preferred cleavage sequence of Val-Glu-His-Asp-|-.. During activation, the N-terminal disordered prodomain is removed by cleavage. Concomitantly, double cleavage gives rise to a large 18-kDa and a small 11-kDa subunit. The two large and two small subunits then assemble to form the active CASP6 complex. Can be cleaved and activated by different caspases, depending on the context. Cleaved and activated by caspase-8 (CASP8) and subsequently by caspase-3 (CASP3). Can also undergo autoactivation by mediating autocleavage at Asp-162 and Asp-176, while it is not able to cleave its N-terminal disordered prodomain. Intramolecular cleavage at Asp-176 is a prerequisite for CASP6 self-activation. Cleaved and activated by CASP1 in neurons, possibly in the context of inflammation. Phosphorylation at Ser-240 inhibits autocleavage, preventing caspase activation. Functionally, cysteine protease that plays essential roles in programmed cell death, axonal degeneration, development and innate immunity. Acts as a non-canonical executioner caspase during apoptosis: localizes in the nucleus and cleaves the nuclear structural protein NUMA1 and lamin A/LMNA thereby inducing nuclear shrinkage and fragmentation. Lamin-A/LMNA cleavage is required for chromatin condensation and nuclear disassembly during apoptotic execution. Acts as a regulator of liver damage by promoting hepatocyte apoptosis: in absence of phosphorylation by AMP-activated protein kinase (AMPK), catalyzes cleavage of BID, leading to cytochrome c release, thereby participating in nonalcoholic steatohepatitis. Cleaves PARK7/DJ-1 in cells undergoing apoptosis. Involved in intrinsic apoptosis by mediating cleavage of RIPK1. Furthermore, cleaves many transcription factors such as NF-kappa-B and cAMP response element-binding protein/CREBBP. Cleaves phospholipid scramblase proteins XKR4 and XKR9. In addition to apoptosis, involved in different forms of programmed cell death. Plays an essential role in defense against viruses by acting as a central mediator of the ZBP1-mediated pyroptosis, apoptosis, and necroptosis (PANoptosis), independently of its cysteine protease activity. PANoptosis is a unique inflammatory programmed cell death, which provides a molecular scaffold that allows the interactions and activation of machinery required for inflammasome/pyroptosis, apoptosis and necroptosis. Mechanistically, interacts with RIPK3 and enhances the interaction between RIPK3 and ZBP1, leading to ZBP1-mediated inflammasome activation and cell death. Plays an essential role in axon degeneration during axon pruning which is the remodeling of axons during neurogenesis but not apoptosis. Regulates B-cell programs both during early development and after antigen stimulation. This is Caspase-6 from Rattus norvegicus (Rat).